Here is a 690-residue protein sequence, read N- to C-terminus: Elongation factor G (690 aa).

A tr-type G domain is found at 8–283 (EDYRNFGIMA…AVVDYLPSPL (276 aa)). GTP contacts are provided by residues 17 to 24 (AHIDAGKT), 81 to 85 (DTPGH), and 135 to 138 (NKMD).

This sequence belongs to the TRAFAC class translation factor GTPase superfamily. Classic translation factor GTPase family. EF-G/EF-2 subfamily.

It localises to the cytoplasm. Catalyzes the GTP-dependent ribosomal translocation step during translation elongation. During this step, the ribosome changes from the pre-translocational (PRE) to the post-translocational (POST) state as the newly formed A-site-bound peptidyl-tRNA and P-site-bound deacylated tRNA move to the P and E sites, respectively. Catalyzes the coordinated movement of the two tRNA molecules, the mRNA and conformational changes in the ribosome. The chain is Elongation factor G from Bradyrhizobium sp. (strain BTAi1 / ATCC BAA-1182).